The sequence spans 58 residues: Birtoxin (58 aa).

The LCN-type CS-alpha/beta domain occupies 3 to 58 (VPGNYPLDKDGNTYKCFLLGGNEECLNVCKLHGVQYGYCYASKCWCEYLEDDKDSV). 3 disulfides stabilise this stretch: Cys18-Cys41, Cys27-Cys46, and Cys31-Cys48.

Expressed by the venom gland.

The protein localises to the secreted. In terms of biological role, beta toxins bind voltage-independently at site-4 of sodium channels (Nav) and shift the voltage of activation toward more negative potentials thereby affecting sodium channel activation and promoting spontaneous and repetitive firing. Moderately toxic, but very high abundant. Does not target reptilian channels. Does not produce effect when administered to blowfly and cabbage looper larvae. In mice, produces convulsions, tremors, increased ventilation and, subsequently, death. The polypeptide is Birtoxin (Parabuthus transvaalicus (Transvaal thick-tailed scorpion)).